We begin with the raw amino-acid sequence, 80 residues long: Large ribosomal subunit protein uL24 (80 aa).

A disordered region spans residues 53–80 (HMRPTQGQTQGSIIEREFPIHSSNVKKS).

Belongs to the universal ribosomal protein uL24 family. In terms of assembly, part of the 50S ribosomal subunit.

Its function is as follows. One of two assembly initiator proteins, it binds directly to the 5'-end of the 23S rRNA, where it nucleates assembly of the 50S subunit. Functionally, one of the proteins that surrounds the polypeptide exit tunnel on the outside of the subunit. The chain is Large ribosomal subunit protein uL24 from Pelodictyon phaeoclathratiforme (strain DSM 5477 / BU-1).